A 227-amino-acid chain; its full sequence is PKHD-type hydroxylase Bcep18194_B0892 (227 aa).

Residues 78 to 178 (KVFPPLFNRY…RVASFFWIQS (101 aa)) form the Fe2OG dioxygenase domain. Fe cation-binding residues include His96, Asp98, and His159. Arg169 provides a ligand contact to 2-oxoglutarate.

Fe(2+) serves as cofactor. It depends on L-ascorbate as a cofactor.

This chain is PKHD-type hydroxylase Bcep18194_B0892, found in Burkholderia lata (strain ATCC 17760 / DSM 23089 / LMG 22485 / NCIMB 9086 / R18194 / 383).